A 476-amino-acid chain; its full sequence is Argininosuccinate lyase (476 aa).

Belongs to the lyase 1 family. Argininosuccinate lyase subfamily.

Its subcellular location is the cytoplasm. It catalyses the reaction 2-(N(omega)-L-arginino)succinate = fumarate + L-arginine. It functions in the pathway amino-acid biosynthesis; L-arginine biosynthesis; L-arginine from L-ornithine and carbamoyl phosphate: step 3/3. The protein is Argininosuccinate lyase of Gluconacetobacter diazotrophicus (strain ATCC 49037 / DSM 5601 / CCUG 37298 / CIP 103539 / LMG 7603 / PAl5).